A 199-amino-acid polypeptide reads, in one-letter code: Cell division protein SepF (199 aa).

The tract at residues 15–79 (TEDGDETEVQ…PQPQQKSSTE (65 aa)) is disordered.

Belongs to the SepF family. As to quaternary structure, homodimer. Interacts with FtsZ.

The protein localises to the cytoplasm. Cell division protein that is part of the divisome complex and is recruited early to the Z-ring. Probably stimulates Z-ring formation, perhaps through the cross-linking of FtsZ protofilaments. Its function overlaps with FtsA. In Streptococcus sanguinis (strain SK36), this protein is Cell division protein SepF.